Consider the following 356-residue polypeptide: Tyrosine recombinase XerS (356 aa).

A Core-binding (CB) domain is found at 16–121 (VMPPYVLEYY…ALSSLYKYLT (106 aa)). The Tyr recombinase domain maps to 169–354 (GFLDYIDSEY…INEEQKNALD (186 aa)). Residues R210, K234, H306, R309, and H332 contribute to the active site. Catalysis depends on Y341, which acts as the O-(3'-phospho-DNA)-tyrosine intermediate.

The protein belongs to the 'phage' integrase family. XerS subfamily.

It is found in the cytoplasm. FtsK is required for recombination. In terms of biological role, site-specific tyrosine recombinase, which acts by catalyzing the cutting and rejoining of the recombining DNA molecules. Essential to convert dimers of the bacterial chromosome into monomers to permit their segregation at cell division. In Lactococcus lactis subsp. cremoris (strain SK11), this protein is Tyrosine recombinase XerS.